The chain runs to 207 residues: Urease accessory protein UreE (207 aa).

A compositionally biased stretch (basic and acidic residues) spans 170-194 (EHHGHSHSHSHDHDHDHDHDHDHQH). Residues 170-207 (EHHGHSHSHSHDHDHDHDHDHDHQHGPCCSHGHHHGHR) are disordered.

The protein belongs to the UreE family.

The protein resides in the cytoplasm. Its function is as follows. Involved in urease metallocenter assembly. Binds nickel. Probably functions as a nickel donor during metallocenter assembly. This is Urease accessory protein UreE from Burkholderia pseudomallei (strain 1106a).